The chain runs to 271 residues: 3-methyl-2-oxobutanoate hydroxymethyltransferase (271 aa).

Residues aspartate 42 and aspartate 86 each contribute to the Mg(2+) site. Residues 42-43 (DS), aspartate 86, and lysine 116 contribute to the 3-methyl-2-oxobutanoate site. Glutamate 118 serves as a coordination point for Mg(2+). Residue glutamate 185 is the Proton acceptor of the active site.

The protein belongs to the PanB family. As to quaternary structure, homodecamer; pentamer of dimers. It depends on Mg(2+) as a cofactor.

Its subcellular location is the cytoplasm. It carries out the reaction 3-methyl-2-oxobutanoate + (6R)-5,10-methylene-5,6,7,8-tetrahydrofolate + H2O = 2-dehydropantoate + (6S)-5,6,7,8-tetrahydrofolate. The protein operates within cofactor biosynthesis; (R)-pantothenate biosynthesis; (R)-pantoate from 3-methyl-2-oxobutanoate: step 1/2. Its function is as follows. Catalyzes the reversible reaction in which hydroxymethyl group from 5,10-methylenetetrahydrofolate is transferred onto alpha-ketoisovalerate to form ketopantoate. This is 3-methyl-2-oxobutanoate hydroxymethyltransferase from Synechococcus sp. (strain CC9605).